Here is an 802-residue protein sequence, read N- to C-terminus: MAARGRRAWLSVLLGLVLGFVLASRLVLPRASELKRAGPRRRASPEGCRSGQAAASQAGGARGDARGAQLWPPGSDPDGGPRDRNFLFVGVMTAQKYLQTRAVAAYRTWSKTIPGKVQFFSSEGSDTSVPIPVVPLRGVDDSYPPQKKSFMMLKYMHDHYLDKYEWFMRADDDVYIKGDRLENFLRSLNSSEPLFLGQTGLGTTEEMGKLALEPGENFCMGGPGVIMSREVLRRMVPHIGKCLREMYTTHEDVEVGRCVRRFAGVQCVWSYEMQQLFYENYEQNKKGYIRDLHNSKIHQAITLHPNKNPPYQYRLHSYMLSRKISELRHRTIQLHREIVLMSKYSNTEIHKEDLQLGIPPSFMRFQPRQREEILEWEFLTGKYLYSAVDGQPPRRGMDSAQREALDDIVMQVMEMINANAKTRGRIIDFKEIQYGYRRVNPMYGAEYILDLLLLYKKHKGKKMTVPVRRHAYLQQTFSKIQFVEHEELDAQELAKRINQESGSLSFLSNSLKKLVPFQLPGSKSEHKEPKDKKINILIPLSGRFDMFVRFMGNFEKTCLIPNQNVKLVVLLFNSDSNPDKAKQVELMRDYRIKYPKADMQILPVSGEFSRALALEVGSSQFNNESLLFFCDVDLVFTTEFLQRCRANTVLGQQIYFPIIFSQYDPKIVYSGKVPSDNHFAFTQKTGFWRNYGFGITCIYKGDLVRVGGFDVSIQGWGLEDVDLFNKVVQAGLKTFRSQEVGVVHVHHPVFCDPNLDPKQYKMCLGSKASTYGSTQQLAEMWLEKNDPSYSKSSNNNGSVRTA.

Topologically, residues 1–7 (MAARGRR) are cytoplasmic. Residues 8–28 (AWLSVLLGLVLGFVLASRLVL) form a helical; Signal-anchor for type II membrane protein membrane-spanning segment. Topologically, residues 29–802 (PRASELKRAG…SNNNGSVRTA (774 aa)) are lumenal. The disordered stretch occupies residues 34-82 (LKRAGPRRRASPEGCRSGQAAASQAGGARGDARGAQLWPPGSDPDGGPR). 2 stretches are compositionally biased toward low complexity: residues 49 to 59 (RSGQAAASQAG) and 66 to 78 (RGAQ…SDPD). N-linked (GlcNAc...) asparagine glycosylation is found at Asn189 and Asn623. 2 residues coordinate a divalent metal cation: Asp633 and His747. An N-linked (GlcNAc...) asparagine glycan is attached at Asn796.

This sequence belongs to the chondroitin N-acetylgalactosaminyltransferase family. The cofactor is Co(2+). It depends on Mn(2+) as a cofactor. Requires Cd(2+) as cofactor. As to expression, ubiquitous, with the highest levels in placenta. Detected at low levels in brain, heart, skeletal muscle, colon, thymus, spleen, kidney, liver, adrenal gland, mammary gland, stomach, small intestine, lung and peripheral blood leukocytes.

It localises to the golgi apparatus. Its subcellular location is the golgi stack membrane. The protein resides in the secreted. It carries out the reaction 3-O-(beta-D-GlcA-(1-&gt;3)-beta-D-GalNAc-(1-&gt;4)-beta-D-GlcA-(1-&gt;3)-beta-D-Gal-(1-&gt;3)-beta-D-Gal-(1-&gt;4)-beta-D-Xyl)-L-seryl-[protein] + UDP-N-acetyl-alpha-D-galactosamine = 3-O-(beta-D-GalNAc-(1-&gt;4)-beta-D-GlcA-(1-&gt;3)-beta-D-GalNAc-(1-&gt;4)-beta-D-GlcA-(1-&gt;3)-beta-D-Gal-(1-&gt;3)-beta-D-Gal-(1-&gt;4)-beta-D-Xyl)-L-seryl-[protein] + UDP + H(+). The catalysed reaction is 3-O-{beta-D-GlcA-(1-&gt;3)-[beta-D-GalNAc-(1-&gt;4)-beta-D-GlcA-(1-&gt;3)](n)-beta-D-GalNAc-(1-&gt;4)-beta-D-GlcA-(1-&gt;3)-beta-D-Gal-(1-&gt;3)-beta-D-Gal-(1-&gt;4)-beta-D-Xyl}-L-seryl-[protein] + UDP-N-acetyl-alpha-D-galactosamine = 3-O-{[beta-D-GalNAc-(1-&gt;4)-beta-D-GlcA-(1-&gt;3)](n+1)-beta-D-GalNAc-(1-&gt;4)-beta-D-GlcA-(1-&gt;3)-beta-D-Gal-(1-&gt;3)-beta-D-Gal-(1-&gt;4)-beta-D-Xyl}-L-seryl-[protein] + UDP + H(+). The enzyme catalyses 3-O-(beta-D-GalNAc-(1-&gt;4)-beta-D-GlcA-(1-&gt;3)-beta-D-Gal-(1-&gt;3)-beta-D-Gal-(1-&gt;4)-beta-D-Xyl)-L-seryl-[protein] + UDP-alpha-D-glucuronate = 3-O-(beta-D-GlcA-(1-&gt;3)-beta-D-GalNAc-(1-&gt;4)-beta-D-GlcA-(1-&gt;3)-beta-D-Gal-(1-&gt;3)-beta-D-Gal-(1-&gt;4)-beta-D-Xyl)-L-seryl-[protein] + UDP + H(+). It catalyses the reaction 3-O-{[beta-D-GalNAc-(1-&gt;4)-beta-D-GlcA-(1-&gt;3)](n)-beta-D-GalNAc-(1-&gt;4)-beta-D-GlcA-(1-&gt;3)-beta-D-Gal-(1-&gt;3)-beta-D-Gal-(1-&gt;4)-beta-D-Xyl}-L-seryl-[protein] + UDP-alpha-D-glucuronate = 3-O-{beta-D-GlcA-(1-&gt;3)-[beta-D-GalNAc-(1-&gt;4)-beta-D-GlcA-(1-&gt;3)](n)-beta-D-GalNAc-(1-&gt;4)-beta-D-GlcA-(1-&gt;3)-beta-D-Gal-(1-&gt;3)-beta-D-Gal-(1-&gt;4)-beta-D-Xyl}-L-seryl-[protein] + UDP + H(+). Has both beta-1,3-glucuronic acid and beta-1,4-N-acetylgalactosamine transferase activity. Transfers glucuronic acid (GlcUA) from UDP-GlcUA and N-acetylgalactosamine (GalNAc) from UDP-GalNAc to the non-reducing end of the elongating chondroitin polymer. Involved in the negative control of osteogenesis likely through the modulation of NOTCH signaling. The polypeptide is Chondroitin sulfate synthase 1 (Homo sapiens (Human)).